The primary structure comprises 952 residues: Leucine--tRNA ligase (952 aa).

A 'HIGH' region motif is present at residues 65-76 (PYPSGAGLHVGH). The short motif at 727–731 (KMGKS) is the 'KMSKS' region element. Residue Lys730 participates in ATP binding.

This sequence belongs to the class-I aminoacyl-tRNA synthetase family.

It is found in the cytoplasm. The enzyme catalyses tRNA(Leu) + L-leucine + ATP = L-leucyl-tRNA(Leu) + AMP + diphosphate. The sequence is that of Leucine--tRNA ligase from Salinispora arenicola (strain CNS-205).